A 281-amino-acid chain; its full sequence is 2-dehydro-3-deoxyphosphooctonate aldolase (281 aa).

Belongs to the KdsA family.

It localises to the cytoplasm. It carries out the reaction D-arabinose 5-phosphate + phosphoenolpyruvate + H2O = 3-deoxy-alpha-D-manno-2-octulosonate-8-phosphate + phosphate. It participates in carbohydrate biosynthesis; 3-deoxy-D-manno-octulosonate biosynthesis; 3-deoxy-D-manno-octulosonate from D-ribulose 5-phosphate: step 2/3. It functions in the pathway bacterial outer membrane biogenesis; lipopolysaccharide biosynthesis. The sequence is that of 2-dehydro-3-deoxyphosphooctonate aldolase from Janthinobacterium sp. (strain Marseille) (Minibacterium massiliensis).